We begin with the raw amino-acid sequence, 484 residues long: Cobyric acid synthase (484 aa).

Positions 248-435 (VLKVIVPVLP…LHGLFEGSQS (188 aa)) constitute a GATase cobBQ-type domain. Catalysis depends on Cys329, which acts as the Nucleophile. Residue His427 is part of the active site.

The protein belongs to the CobB/CobQ family. CobQ subfamily.

It functions in the pathway cofactor biosynthesis; adenosylcobalamin biosynthesis. Functionally, catalyzes amidations at positions B, D, E, and G on adenosylcobyrinic A,C-diamide. NH(2) groups are provided by glutamine, and one molecule of ATP is hydrogenolyzed for each amidation. This chain is Cobyric acid synthase, found in Pseudomonas putida (strain ATCC 700007 / DSM 6899 / JCM 31910 / BCRC 17059 / LMG 24140 / F1).